The chain runs to 653 residues: MSTIESVLKETRSFPPSEAFRQQATVSGMQAYNDLCEKANADYEGFWADLARELLSWKKPFTQVFDGSQAPFFKWFADGQLNVSYNCLDRHLEHNANKTAIIYETDDGQVTPISYRSLYEQVCQFANGLKSLGVGKGDRVVIYMPMVPQAIVAMQACARIGAIHSVVFGGFSAGALRDRIQDAAAKVVITANESVRGGKLVPLKATVDEALAMDGCDSIEKVVVLQRTYTPCSMGARDITWDALTAGQPLECEPEWMSAEDPLFILYTSGSTGKPKGIQHSSAGYLLGAANSFRWAFDYKPNDIYWCTADVGWITGHSYICYGPLAMGATQVVFEGIPTYPDAGRFWRMIEQHKVNIFYTAPTAIRSLIKLGADLPKQFDLSSLRVLGTVGEPINPEAWMWYYEVVGGGRCPIVDTWWQTETGSAMIAPMPGAVATKPGSCTLPLPGIMADIVDESGAQVEPGRGGFLVIKKPFPSLVRTIWNDPDRFKKTYFPEEFNGQYYLAGDSANRDESGYFWIMGRIDDVLNVSGHRLGTMEIESALVANPLVAEAAVVGKPHDVKGEAVVAFVVLKGIRPEGDEAKKVAAELKSWVAHEIGKIAQPDDIRFGENLPKTRSGKIMRRLLRSIAKGEEITQDTSTLENPQILDQLQEIA.

CoA-binding positions include 196–199 and Thr315; that span reads RGGK. ATP contacts are provided by residues 391 to 393, 415 to 420, Asp506, and Arg521; these read GEP and DTWWQT. Position 529 (Ser529) interacts with CoA. Arg532 provides a ligand contact to ATP. Mg(2+) is bound by residues Val543 and Val548. Lys618 bears the N6-acetyllysine mark.

The protein belongs to the ATP-dependent AMP-binding enzyme family. Mg(2+) serves as cofactor. In terms of processing, acetylated. Deacetylation by the SIR2-homolog deacetylase activates the enzyme.

The enzyme catalyses acetate + ATP + CoA = acetyl-CoA + AMP + diphosphate. Functionally, catalyzes the conversion of acetate into acetyl-CoA (AcCoA), an essential intermediate at the junction of anabolic and catabolic pathways. AcsA undergoes a two-step reaction. In the first half reaction, AcsA combines acetate with ATP to form acetyl-adenylate (AcAMP) intermediate. In the second half reaction, it can then transfer the acetyl group from AcAMP to the sulfhydryl group of CoA, forming the product AcCoA. This Laribacter hongkongensis (strain HLHK9) protein is Acetyl-coenzyme A synthetase.